A 306-amino-acid chain; its full sequence is Glutaminase (306 aa).

Substrate contacts are provided by Ser64, Asn115, Glu159, Asn166, Tyr190, Tyr242, and Val260.

It belongs to the glutaminase family. In terms of assembly, homotetramer.

It carries out the reaction L-glutamine + H2O = L-glutamate + NH4(+). This is Glutaminase from Photobacterium profundum (strain SS9).